A 640-amino-acid chain; its full sequence is Probable potassium transport system protein Kup (640 aa).

12 consecutive transmembrane segments (helical) span residues 26 to 46 (IAGL…TSPL), 69 to 89 (ILSL…VLFI), 117 to 137 (AWVL…DGMI), 155 to 175 (PAFR…LFVI), 186 to 206 (IFGP…IAGI), 224 to 244 (FFAD…LAIT), 265 to 285 (WFLV…ALIL), 297 to 317 (LLVP…ATII), 355 to 375 (IYVP…VVGF), 384 to 404 (AYGI…FVVV), 415 to 435 (AGLF…ATTV), and 437 to 457 (ILAG…LLTT).

This sequence belongs to the HAK/KUP transporter (TC 2.A.72) family.

Its subcellular location is the cell inner membrane. It catalyses the reaction K(+)(in) + H(+)(in) = K(+)(out) + H(+)(out). In terms of biological role, transport of potassium into the cell. Likely operates as a K(+):H(+) symporter. The polypeptide is Probable potassium transport system protein Kup (Aromatoleum aromaticum (strain DSM 19018 / LMG 30748 / EbN1) (Azoarcus sp. (strain EbN1))).